The following is a 450-amino-acid chain: Ribosomal protein uS12 methylthiotransferase RimO (450 aa).

In terms of domain architecture, MTTase N-terminal spans 10 to 125 (SRIALVSLGC…VVDIVRRAAT (116 aa)). [4Fe-4S] cluster contacts are provided by Cys19, Cys54, Cys88, Cys162, Cys166, and Cys169. Residues 148–378 (SGSPFTAYLK…AAVQREVSRA (231 aa)) form the Radical SAM core domain. A TRAM domain is found at 381 to 447 (RARVGSEVTV…PYDLRARVLS (67 aa)).

Belongs to the methylthiotransferase family. RimO subfamily. It depends on [4Fe-4S] cluster as a cofactor.

Its subcellular location is the cytoplasm. The enzyme catalyses L-aspartate(89)-[ribosomal protein uS12]-hydrogen + (sulfur carrier)-SH + AH2 + 2 S-adenosyl-L-methionine = 3-methylsulfanyl-L-aspartate(89)-[ribosomal protein uS12]-hydrogen + (sulfur carrier)-H + 5'-deoxyadenosine + L-methionine + A + S-adenosyl-L-homocysteine + 2 H(+). Functionally, catalyzes the methylthiolation of an aspartic acid residue of ribosomal protein uS12. The polypeptide is Ribosomal protein uS12 methylthiotransferase RimO (Desulforudis audaxviator (strain MP104C)).